Reading from the N-terminus, the 877-residue chain is Leucine--tRNA ligase (877 aa).

The 'HIGH' region signature appears at 48 to 58 (PYPSGKLHMGH). Positions 636–640 (KMSKS) match the 'KMSKS' region motif. K639 lines the ATP pocket.

The protein belongs to the class-I aminoacyl-tRNA synthetase family.

It localises to the cytoplasm. It carries out the reaction tRNA(Leu) + L-leucine + ATP = L-leucyl-tRNA(Leu) + AMP + diphosphate. This Ralstonia pickettii (strain 12J) protein is Leucine--tRNA ligase.